A 158-amino-acid polypeptide reads, in one-letter code: 2-C-methyl-D-erythritol 2,4-cyclodiphosphate synthase (158 aa).

Residues Asp-9 and His-11 each coordinate a divalent metal cation. Residues 9 to 11 (DVH) and 35 to 36 (HS) each bind 4-CDP-2-C-methyl-D-erythritol 2-phosphate. His-43 provides a ligand contact to a divalent metal cation. Residues 57-59 (DIG), 62-66 (FPDTD), 101-107 (AQAPKMA), 133-136 (TTTE), Phe-140, and Arg-143 contribute to the 4-CDP-2-C-methyl-D-erythritol 2-phosphate site.

Belongs to the IspF family. In terms of assembly, homotrimer. A divalent metal cation serves as cofactor.

The catalysed reaction is 4-CDP-2-C-methyl-D-erythritol 2-phosphate = 2-C-methyl-D-erythritol 2,4-cyclic diphosphate + CMP. Its pathway is isoprenoid biosynthesis; isopentenyl diphosphate biosynthesis via DXP pathway; isopentenyl diphosphate from 1-deoxy-D-xylulose 5-phosphate: step 4/6. Functionally, involved in the biosynthesis of isopentenyl diphosphate (IPP) and dimethylallyl diphosphate (DMAPP), two major building blocks of isoprenoid compounds. Catalyzes the conversion of 4-diphosphocytidyl-2-C-methyl-D-erythritol 2-phosphate (CDP-ME2P) to 2-C-methyl-D-erythritol 2,4-cyclodiphosphate (ME-CPP) with a corresponding release of cytidine 5-monophosphate (CMP). This is 2-C-methyl-D-erythritol 2,4-cyclodiphosphate synthase from Vibrio cholerae serotype O1 (strain ATCC 39541 / Classical Ogawa 395 / O395).